The following is a 219-amino-acid chain: Transmembrane emp24 domain-containing protein 10 (219 aa).

Positions 1 to 31 are cleaved as a signal peptide; it reads MSGLSGPPTRRGPFPLALLLLFLLGPSLVLA. The segment at 1 to 142 is required for interaction with STX17; sequence MSGLSGPPTR…KNYEEIAKVE (142 aa). Topologically, residues 32–185 are lumenal; the sequence is ISFHLPINSR…RDTNESTNTR (154 aa). Residues 41 to 193 enclose the GOLD domain; the sequence is RKCLREEIHK…TRVLYFSIFS (153 aa). Residues Arg-171 and Arg-176 each carry the dimethylated arginine modification. Asn-179 is a glycosylation site (N-linked (GlcNAc...) asparagine). Residues 186–206 form a helical membrane-spanning segment; sequence VLYFSIFSMFCLIGLATWQVF. The segment at 204–219 is interaction with COPG1; sequence QVFYLRRFFKAKKLIE. At 207–219 the chain is on the cytoplasmic side; sequence YLRRFFKAKKLIE. Residues 207–219 are interaction with ARF1 and IL1B; it reads YLRRFFKAKKLIE. A COPII vesicle coat-binding motif is present at residues 211–212; sequence FF. A COPI vesicle coat-binding motif is present at residues 211 to 219; the sequence is FFKAKKLIE.

This sequence belongs to the EMP24/GP25L family. Predominantly dimeric and to a lesser extent monomeric in the ER. Monomer and dimer in ERGIC and cis-Golgi network. Forms homooligomer (via GOLD domain); the assembly is promoted by direct binding with leaderless cargos and may form a protein channel that facilitates cargo entry into the ERGIC. Forms heterooligomeric complexes with other members of the p24 family such as TMED2, TMED7 and TMED9. Interacts (via GOLD domain) with TMED2 (via GOLD domain); the complex is required for export of TMED10 from the ER to the cis-Golgi network; the complex is proposed to be involved in cis-Golgi network dynamics and / or biogenesis. Associates with the COPI vesicle coat subunits (coatomer). Tetramerization of the cytoplasmic domain at the Golgi membrane in vitro; the complex is proposed to interact with COPI coatomer and induce budding of the vesicles. Interacts with COPG1; the interaction involves TMED10 homodimer. Interacts with ARF1 (GDP-bound); the interaction probably involves a TMED10 oligomer. Interacts with SEC23A, SEC24B, SEC24C and SEC24D components of the coat protein complex II/COPII, indicative of an association of TMED10 with the COPII vesicle coat. Interacts with CD59. Interacts with MPPE1/PGAP5; the complex might recruit and sort GPI-anchored proteins to the ER-exit site, or the interaction might lead to recycling of PGAP5 between the ER and the Golgi. Interacts with F2LR1/PAR2. Interacts with KDELR2/ERD2; the interaction is disrupted by KDELR2 ligand. Found in a complex composed at least of SURF4, TMED2 and TMED10. Associates with the presenilin-dependent gamma-secretase complex. Interacts with STX17; the interaction is direct. Interacts with IL-1; the interaction is direct. Interacts with RAB21 (active GTP-bound form); the interaction is indirect and regulates TMED10 abundance and localization at the Golgi.

It is found in the endoplasmic reticulum membrane. Its subcellular location is the endoplasmic reticulum-Golgi intermediate compartment membrane. The protein resides in the golgi apparatus membrane. It localises to the golgi apparatus. The protein localises to the cis-Golgi network membrane. It is found in the trans-Golgi network membrane. Its subcellular location is the cytoplasmic vesicle. The protein resides in the secretory vesicle membrane. It localises to the cell membrane. The protein localises to the melanosome. Its function is as follows. Cargo receptor involved in protein vesicular trafficking and quality control in the endoplasmic reticulum (ER) and Golgi. The p24 protein family is a group of transmembrane proteins that bind coat protein complex I/COPI and coat protein complex II/COPII involved in vesicular trafficking between the membranes. Acts at the lumenal side for incorporation of secretory cargo molecules into transport vesicles and involved in vesicle coat formation at the cytoplasmic side. Mainly functions in the early secretory pathway and cycles between the ER, ER-Golgi intermediate compartment (ERGIC) and Golgi, mediating cargo transport through COPI and COPII-coated vesicles. In COPII vesicle-mediated anterograde transport, involved in the transport of GPI-anchored proteins by acting together with TMED2 as their cargo receptor; the function specifically implies SEC24C and SEC24D of the COPII vesicle coat and lipid raft-like microdomains of the ER. Recognizes GPI anchors structural remodeled in the ER by the GPI inositol-deacylase/PGAP1 and the metallophosphoesterase MPPE1/PGAP5. In COPI vesicle-mediated retrograde transport, involved in the biogenesis of COPI vesicles and vesicle coat recruitment. Involved in trafficking of amyloid beta A4 protein and soluble APP-beta release (independent from the modulation of gamma-secretase activity). Involved in the KDELR2-mediated retrograde transport of the toxin A subunit (CTX-A-K63)together with COPI and the COOH terminus of KDELR2. On Golgi membranes, acts as a primary receptor for ARF1-GDP, a GTP-binding protein involved in COPI-vesicle formation. Increases coatomer-dependent GTPase-activating activity of ARFGAP2 which mediates the hydrolysis of ARF1-bound GTP and therefore modulates protein trafficking from the Golgi apparatus. Involved in the exocytic trafficking of G protein-coupled receptors F2LR1/PAR2 (trypsin and tryspin-like enzyme receptor), OPRM1 (opioid receptor) and P2RY4 (UTD and UDP receptor) from the Golgi to the plasma membrane, thus contributing to receptor resensitization. In addition to its cargo receptor activity, may also act as a protein channel after oligomerization, facilitating the post-translational entry of leaderless cytoplasmic cargo into the ERGIC. Involved in the translocation into ERGIC, the vesicle entry and the secretion of leaderless cargos (lacking the secretion signal sequence), including the mature form of interleukin 1/IL-1 family members, the alpha-crystallin B chain HSPB5, the carbohydrate-binding proteins galectin-1/LGALS1 and galectin-3/LGALS3, the microtubule-associated protein Tau/MAPT, and the annexin A1/ANXA1; the translocation process is dependent on cargo protein unfolding and enhanced by chaperones HSP90AB1 and HSP90B1/GRP9. Could also associates with the presenilin-dependent gamma-secretase complex in order to regulate gamma-cleavages of the amyloid beta A4 protein to yield amyloid-beta 40/Abeta40. The polypeptide is Transmembrane emp24 domain-containing protein 10 (TMED10) (Pongo abelii (Sumatran orangutan)).